The primary structure comprises 396 residues: Elongation factor Tu (396 aa).

A tr-type G domain is found at 10–205 (KPHVNIGTIG…AVDESIPDPV (196 aa)). The segment at 19 to 26 (GHVDHGKT) is G1. GTP is bound at residue 19-26 (GHVDHGKT). T26 is a binding site for Mg(2+). A G2 region spans residues 62 to 66 (GITIN). Residues 83-86 (DAPG) form a G3 region. GTP-binding positions include 83 to 87 (DAPGH) and 138 to 141 (NKAD). Residues 138–141 (NKAD) are G4. Residues 175–177 (SAL) are G5.

It belongs to the TRAFAC class translation factor GTPase superfamily. Classic translation factor GTPase family. EF-Tu/EF-1A subfamily. As to quaternary structure, monomer.

It localises to the cytoplasm. The enzyme catalyses GTP + H2O = GDP + phosphate + H(+). Its function is as follows. GTP hydrolase that promotes the GTP-dependent binding of aminoacyl-tRNA to the A-site of ribosomes during protein biosynthesis. The protein is Elongation factor Tu of Mycobacterium avium (strain 104).